A 232-amino-acid polypeptide reads, in one-letter code: ATP phosphoribosyltransferase (232 aa).

Belongs to the ATP phosphoribosyltransferase family. Short subfamily. As to quaternary structure, heteromultimer composed of HisG and HisZ subunits.

Its subcellular location is the cytoplasm. The catalysed reaction is 1-(5-phospho-beta-D-ribosyl)-ATP + diphosphate = 5-phospho-alpha-D-ribose 1-diphosphate + ATP. It participates in amino-acid biosynthesis; L-histidine biosynthesis; L-histidine from 5-phospho-alpha-D-ribose 1-diphosphate: step 1/9. Catalyzes the condensation of ATP and 5-phosphoribose 1-diphosphate to form N'-(5'-phosphoribosyl)-ATP (PR-ATP). Has a crucial role in the pathway because the rate of histidine biosynthesis seems to be controlled primarily by regulation of HisG enzymatic activity. In Mesorhizobium japonicum (strain LMG 29417 / CECT 9101 / MAFF 303099) (Mesorhizobium loti (strain MAFF 303099)), this protein is ATP phosphoribosyltransferase (hisG).